The sequence spans 436 residues: GTPase Der (436 aa).

EngA-type G domains follow at residues 4-167 (PTVA…PNEI) and 175-351 (IKFS…HAQN). GTP contacts are provided by residues 10 to 17 (GRPNVGKS), 57 to 61 (DTGGI), 119 to 122 (NKVD), 181 to 188 (GRPNVGKS), 229 to 233 (DTAGM), and 294 to 297 (NKWD). A KH-like domain is found at 352-436 (LRISSSVLND…PIHLIARKRK (85 aa)).

It belongs to the TRAFAC class TrmE-Era-EngA-EngB-Septin-like GTPase superfamily. EngA (Der) GTPase family. As to quaternary structure, associates with the 50S ribosomal subunit.

Functionally, GTPase that plays an essential role in the late steps of ribosome biogenesis. This is GTPase Der from Lactococcus lactis subsp. cremoris (strain SK11).